An 800-amino-acid chain; its full sequence is MSRRRAHDTEDEGYDHRRNKRRRVSENQEIEDRLESLILRVGERSTSSVESNLEGLVSVLEADLGTFRLKILRILSDCAVRMPEKCTVYTTLVGLLNAKNYKFGGEFVDHMVKTFKESLKLCRWDAARYSLRFLADLVNCHVISATSLLQLLDTMIDVSNEDTVPQVRRDWFVFAVLSTLPWVGRDLYEKKESALESLLLRIEVYLNKRSKKHHNALRVWSSDAPHPQEEYLDCLWAQIRKLRQDNWAEKHIPRPYLVFDSILCEALQHNLPAIVPPPHHDNFEYPMPWVVYRMFDYTDCPDGPNLPGAHSIERFLIEEHLHHIIETYHHERKDCAAQLLSFPFKHKIPLEYCIVEVIFAELFHMPTPRYLDICYGSILIELCKLQPATLPQVLAQATEILFMRIDSMNTSCFDRFVNWFSYHLSNFKFTWSWDEWDSCLLLDGEHPRPKFIQEVLQKCLRLSYHQRITEMMPTTYAKLIPLTPVPNYKYANEEAANLPGTTVAHQLVVAIRQKCTPEEVVNILKDIPSSGYSGEEMSDGSFNALKIDVFVQTLLNLGSKSFSHSFAAISKFHSVFRALAETEEAQICILHNIYELWSSHQQMMVVLIDKLLKLQIVDCSAVATWIFSKEMTGEFTKMYLWEILHLTIKKMNKHVIKLNSELSEAKDKLAKADSSSSDSEDDSSHKRKKPITHADKPSEEVVERMEEKLEAANVNQKRLFLIVFQRFIMILSEHLLRSDTDGRDPDTDWYRWTIGRLQQVFLMHHEQVQKYSSTLETLLFTSDLDTHILEVFQQFVALRA.

Residues 1-26 (MSRRRAHDTEDEGYDHRRNKRRRVSE) are disordered. Thr9 bears the Phosphothreonine mark. Residues 31–243 (EDRLESLILR…CLWAQIRKLR (213 aa)) form the MIF4G domain. A disordered region spans residues 669–700 (LAKADSSSSDSEDDSSHKRKKPITHADKPSEE).

Belongs to the NCBP1 family. In terms of assembly, component of the nuclear cap-binding complex (CBC), a heterodimer composed of Cbp80 and Cbp20 that interacts with m7GpppG-capped RNA.

Its subcellular location is the nucleus. Its function is as follows. Component of the cap-binding complex (CBC), which binds cotranscriptionally to the 5'-cap of pre-mRNAs and is involved in various processes such as pre-mRNA splicing and RNA-mediated gene silencing (RNAi). The CBC complex is involved in miRNA-mediated RNA interference via its interaction with Ars2 and is required for primary microRNAs (miRNAs) processing. Also involved in innate immunity via the short interfering RNAs (siRNAs) processing machinery by restricting the viral RNA production. In the CBC complex, Cbp80 does not bind directly capped RNAs (m7GpppG-capped RNA) but is required to stabilize the movement of the N-terminal loop of Cbp20 and lock the CBC into a high affinity cap-binding state with the cap structure. This chain is Nuclear cap-binding protein subunit 1 (Cbp80), found in Drosophila yakuba (Fruit fly).